The following is a 473-amino-acid chain: Cysteine--tRNA ligase (473 aa).

Cysteine 28 serves as a coordination point for Zn(2+). The 'HIGH' region motif lies at 30-40 (MTVYDYCHLGH). Zn(2+)-binding residues include cysteine 209, histidine 234, and glutamate 238. Residues 282–286 (KMSKS) carry the 'KMSKS' region motif. Lysine 285 contacts ATP.

It belongs to the class-I aminoacyl-tRNA synthetase family. As to quaternary structure, monomer. It depends on Zn(2+) as a cofactor.

The protein resides in the cytoplasm. It carries out the reaction tRNA(Cys) + L-cysteine + ATP = L-cysteinyl-tRNA(Cys) + AMP + diphosphate. The sequence is that of Cysteine--tRNA ligase from Neisseria gonorrhoeae (strain ATCC 700825 / FA 1090).